The primary structure comprises 656 residues: Macrolide export ATP-binding/permease protein MacB (656 aa).

Residues 6–244 enclose the ABC transporter domain; the sequence is LEVSACYRSF…VKAQVDMSLA (239 aa). Position 42-49 (42-49) interacts with ATP; it reads GASGSGKS. The next 4 membrane-spanning stretches (helical) occupy residues 277–297, 531–551, 586–606, and 621–641; these read FLTM…VALG, LLIS…VMNI, LVCL…GVVF, and SIVA…FLPA.

This sequence belongs to the ABC transporter superfamily. Macrolide exporter (TC 3.A.1.122) family. Homodimer. Part of the tripartite efflux system MacAB-TolC, which is composed of an inner membrane transporter, MacB, a periplasmic membrane fusion protein, MacA, and an outer membrane component, TolC. The complex forms a large protein conduit and can translocate molecules across both the inner and outer membranes. Interacts with MacA.

It is found in the cell inner membrane. Its function is as follows. Part of the tripartite efflux system MacAB-TolC. MacB is a non-canonical ABC transporter that contains transmembrane domains (TMD), which form a pore in the inner membrane, and an ATP-binding domain (NBD), which is responsible for energy generation. Confers resistance against macrolides. The polypeptide is Macrolide export ATP-binding/permease protein MacB (Shewanella oneidensis (strain ATCC 700550 / JCM 31522 / CIP 106686 / LMG 19005 / NCIMB 14063 / MR-1)).